We begin with the raw amino-acid sequence, 270 residues long: Sulfur carrier protein FdhD (270 aa).

2 stretches are compositionally biased toward basic and acidic residues: residues Met-1–Glu-10 and Arg-20–Trp-30. The interval Met-1–Trp-30 is disordered. Residue Cys-117 is the Cysteine persulfide intermediate of the active site.

Belongs to the FdhD family.

Its subcellular location is the cytoplasm. Its function is as follows. Required for formate dehydrogenase (FDH) activity. Acts as a sulfur carrier protein that transfers sulfur from IscS to the molybdenum cofactor prior to its insertion into FDH. This Chromobacterium violaceum (strain ATCC 12472 / DSM 30191 / JCM 1249 / CCUG 213 / NBRC 12614 / NCIMB 9131 / NCTC 9757 / MK) protein is Sulfur carrier protein FdhD.